The following is a 103-amino-acid chain: Large ribosomal subunit protein bL21 (103 aa).

It belongs to the bacterial ribosomal protein bL21 family. As to quaternary structure, part of the 50S ribosomal subunit. Contacts protein L20.

Functionally, this protein binds to 23S rRNA in the presence of protein L20. This is Large ribosomal subunit protein bL21 from Mycolicibacterium smegmatis (strain ATCC 700084 / mc(2)155) (Mycobacterium smegmatis).